The chain runs to 430 residues: Gamma-glutamyl phosphate reductase (430 aa).

Belongs to the gamma-glutamyl phosphate reductase family.

It is found in the cytoplasm. The enzyme catalyses L-glutamate 5-semialdehyde + phosphate + NADP(+) = L-glutamyl 5-phosphate + NADPH + H(+). The protein operates within amino-acid biosynthesis; L-proline biosynthesis; L-glutamate 5-semialdehyde from L-glutamate: step 2/2. In terms of biological role, catalyzes the NADPH-dependent reduction of L-glutamate 5-phosphate into L-glutamate 5-semialdehyde and phosphate. The product spontaneously undergoes cyclization to form 1-pyrroline-5-carboxylate. The polypeptide is Gamma-glutamyl phosphate reductase (Rhodopseudomonas palustris (strain BisB5)).